A 421-amino-acid chain; its full sequence is Lipid II:glycine glycyltransferase (421 aa).

This sequence belongs to the FemABX family. Monomer.

It localises to the cytoplasm. It carries out the reaction beta-D-GlcNAc-(1-&gt;4)-Mur2Ac(oyl-L-Ala-D-isoglutaminyl-L-Lys-D-Ala-D-Ala)-di-trans,octa-cis-undecaprenyl diphosphate + glycyl-tRNA(Gly) = beta-D-GlcNAc-(1-&gt;4)-Mur2Ac(oyl-L-Ala-D-isoglutaminyl-L-Lys-(N(6)-Gly)-D-Ala-D-Ala)-di-trans,octa-cis-undecaprenyl diphosphate + tRNA(Gly) + H(+). In terms of biological role, catalyzes the incorporation of the first glycine of the pentaglycine interpeptide bridge, which is characteristic of the S.aureus peptidoglycan. This glycine is added to the epsilon-amino group of the L-lysine of the membrane-bound lipid II intermediate (GlcNAc-(beta-1,4)-N-acetylmuramic acid(-L-Ala-D-iGln-L-Lys-D-Ala-D-Ala)-pyrophosphoryl-undecaprenol), using glycyl-tRNA(Gly) as donor, in a ribosome-independent mechanism. Involved in methicillin resistance. The sequence is that of Lipid II:glycine glycyltransferase (femX) from Staphylococcus aureus (strain Mu50 / ATCC 700699).